The primary structure comprises 365 residues: Cobalt-precorrin-5B C(1)-methyltransferase (365 aa).

It belongs to the CbiD family.

The enzyme catalyses Co-precorrin-5B + S-adenosyl-L-methionine = Co-precorrin-6A + S-adenosyl-L-homocysteine. It participates in cofactor biosynthesis; adenosylcobalamin biosynthesis; cob(II)yrinate a,c-diamide from sirohydrochlorin (anaerobic route): step 6/10. In terms of biological role, catalyzes the methylation of C-1 in cobalt-precorrin-5B to form cobalt-precorrin-6A. In Polaromonas naphthalenivorans (strain CJ2), this protein is Cobalt-precorrin-5B C(1)-methyltransferase.